A 351-amino-acid polypeptide reads, in one-letter code: MFRAIPFTATVHPYAITAPRLVVKMSAIATKNTRVESLEVKPPAHPTYDLKEVMKLALSEDAGNLGDVTCKATIPLDMESDAHFLAKEDGIIAGIALAEMIFAEVDPSLKVEWYVNDGDKVHKGLKFGKVQGNAYNIVIAERVVLNFMQRMSGIATLTKEMADAAHPAYILETRKTAPGLRLVDKWAVLIGGGKNHRMGLFDMVMIKDNHISAAGGVGKALKSVDQYLEQNKLQIGVEVETRTIEEVREVLDYASQTKTSLTRIMLDNMVVPLSNGDIDVSMLKEAVELINGRFDTEASGNVTLETVHKIGQTGVTYISSGALTHSVKALDISLKIDTELALEVGRRTKRA.

Residues Arg-142, 173-175 (TRK), Arg-197, Lys-207, Glu-240, Asp-267, 299-301 (SGN), and 320-322 (SGA) each bind substrate.

Belongs to the NadC/ModD family. Expressed in roots and flowers.

The protein localises to the mitochondrion. The enzyme catalyses nicotinate beta-D-ribonucleotide + CO2 + diphosphate = quinolinate + 5-phospho-alpha-D-ribose 1-diphosphate + 2 H(+). The protein operates within alkaloid biosynthesis; nicotine biosynthesis. Its pathway is cofactor biosynthesis; NAD(+) biosynthesis; nicotinate D-ribonucleotide from quinolinate: step 1/1. In terms of biological role, involved in the biosynthesis of pyridine alkaloid natural products, leading mainly to the production of anabasine, anatabine, nicotine and nornicotine, effective deterrents against herbivores with antiparasitic and pesticide properties (neurotoxins); nornicotine serves as the precursor in the synthesis of the carcinogen compound N'-nitrosonornicotine (NNN). Involved in the catabolism of quinolinic acid (QA). The chain is Quinolinate phosphoribosyltransferase [decarboxylating] 2b, mitochondrial from Nicotiana tabacum (Common tobacco).